We begin with the raw amino-acid sequence, 884 residues long: Protein translocase subunit SecA (884 aa).

ATP contacts are provided by residues Gln83, 101–105, and Asp491; that span reads GEGKT.

This sequence belongs to the SecA family.

The protein resides in the plastid. Its subcellular location is the chloroplast stroma. It localises to the chloroplast thylakoid membrane. The catalysed reaction is ATP + H2O + cellular proteinSide 1 = ADP + phosphate + cellular proteinSide 2.. Functionally, has a central role in coupling the hydrolysis of ATP to the transfer of proteins across the thylakoid membrane. The protein is Protein translocase subunit SecA of Porphyra purpurea (Red seaweed).